The chain runs to 739 residues: MICOS complex subunit Mic60 (739 aa).

Residues 23–63 (ANNRQFGGSSSGSGGREQGRRQQEEQGQQGDQGYQGYQSLP) are disordered. The span at 47–61 (EQGQQGDQGYQGYQS) shows a compositional bias: low complexity. Residues 69–89 (AGFGKVVLFVSPLAAVGGVIT) form a helical membrane-spanning segment. Residues 154–219 (VTGLFGGGSG…PAAKPKDNPL (66 aa)) are disordered. The segment covering 163–198 (GDDKSKKSKVEPVKATPAEEKRPSKPSEVSKTEAKP) has biased composition (basic and acidic residues). Residues 199-212 (VSKPAAAAAPAPAA) are compositionally biased toward low complexity. Positions 283-339 (TAVATAERAAREAQEKIVACEIALSAAATAQNAKKVEAVRDKIKKLVDHIGNVKDEL) form a coiled coil.

This sequence belongs to the MICOS complex subunit Mic60 family. In terms of assembly, component of the mitochondrial contact site and cristae organizing system (MICOS) complex. Interacts with the mitochondria-shaping protein Opa1.

Its subcellular location is the mitochondrion inner membrane. Functionally, component of the MICOS complex, a large protein complex of the mitochondrial inner membrane that plays crucial roles in the maintenance of crista junctions, inner membrane architecture, and formation of contact sites to the outer membrane. The sequence is that of MICOS complex subunit Mic60 from Drosophila melanogaster (Fruit fly).